The chain runs to 591 residues: Aspartate--tRNA(Asp/Asn) ligase (591 aa).

E175 is an L-aspartate binding site. The aspartate stretch occupies residues 199 to 202 (QQFK). L-aspartate contacts are provided by R221 and H453. 221 to 223 (RDE) contributes to the ATP binding site. E486 lines the ATP pocket. Position 493 (R493) interacts with L-aspartate. ATP is bound at residue 538–541 (GIDR).

This sequence belongs to the class-II aminoacyl-tRNA synthetase family. Type 1 subfamily. Homodimer.

It is found in the cytoplasm. It catalyses the reaction tRNA(Asx) + L-aspartate + ATP = L-aspartyl-tRNA(Asx) + AMP + diphosphate. Aspartyl-tRNA synthetase with relaxed tRNA specificity since it is able to aspartylate not only its cognate tRNA(Asp) but also tRNA(Asn). Reaction proceeds in two steps: L-aspartate is first activated by ATP to form Asp-AMP and then transferred to the acceptor end of tRNA(Asp/Asn). This Paracoccus denitrificans (strain Pd 1222) protein is Aspartate--tRNA(Asp/Asn) ligase.